The primary structure comprises 122 residues: Acidic phospholipase A2 4 (122 aa).

Intrachain disulfides connect C26/C115, C28/C44, C43/C95, C49/C122, C50/C88, C57/C81, and C75/C86. Ca(2+)-binding residues include F27, G29, and G31. H47 is a catalytic residue. D48 contributes to the Ca(2+) binding site. D89 is an active-site residue.

This sequence belongs to the phospholipase A2 family. Group II subfamily. D49 sub-subfamily. It depends on Ca(2+) as a cofactor. Expressed by the venom gland.

It localises to the secreted. It catalyses the reaction a 1,2-diacyl-sn-glycero-3-phosphocholine + H2O = a 1-acyl-sn-glycero-3-phosphocholine + a fatty acid + H(+). Its function is as follows. Snake venom phospholipase A2 (PLA2) that has high lipolytic activity. PLA2 catalyzes the calcium-dependent hydrolysis of the 2-acyl groups in 3-sn-phosphoglycerides. The protein is Acidic phospholipase A2 4 of Craspedocephalus gramineus (Bamboo pit viper).